A 447-amino-acid chain; its full sequence is uncharacterized protein (447 aa).

The protein belongs to the class-II fumarase/aspartase family.

The protein localises to the cytoplasm. The protein resides in the nucleus. This is an uncharacterized protein from Schizosaccharomyces pombe (strain 972 / ATCC 24843) (Fission yeast).